We begin with the raw amino-acid sequence, 730 residues long: Acetylene hydratase (730 aa).

[4Fe-4S] cluster contacts are provided by cysteine 9 and cysteine 12. The active site involves aspartate 13. Residues cysteine 16 and cysteine 46 each coordinate [4Fe-4S] cluster. Residues lysine 48, 111 to 114 (TEIN), cysteine 141, 172 to 173 (KN), 177 to 179 (HNW), 199 to 202 (LDPR), 218 to 221 (YGTD), serine 296, glutamine 300, 416 to 418 (ASN), 422 to 423 (GY), 442 to 444 (YDQ), aspartate 460, arginine 465, 602 to 613 (FAGLREDSNFQS), arginine 606, histidine 676, aspartate 699, and arginine 720 each bind W-bis(molybdopterin guanine dinucleotide).

This sequence belongs to the prokaryotic molybdopterin-containing oxidoreductase family. In terms of assembly, monomer. It depends on [4Fe-4S] cluster as a cofactor. W-bis(molybdopterin guanine dinucleotide) serves as cofactor.

The enzyme catalyses acetaldehyde = acetylene + H2O. Its function is as follows. Catalyzes the hydration of acetylene to form acetaldehyde. Ethylene cannot act as a substrate. The polypeptide is Acetylene hydratase (Syntrophotalea acetylenica (Pelobacter acetylenicus)).